The sequence spans 175 residues: Shikimate kinase (175 aa).

17–22 (GAGKST) serves as a coordination point for ATP. Position 21 (S21) interacts with Mg(2+). The substrate site is built by D39, R63, and G85. R123 provides a ligand contact to ATP. R142 is a substrate binding site. ATP is bound at residue Q159.

This sequence belongs to the shikimate kinase family. As to quaternary structure, monomer. It depends on Mg(2+) as a cofactor.

The protein localises to the cytoplasm. The catalysed reaction is shikimate + ATP = 3-phosphoshikimate + ADP + H(+). It functions in the pathway metabolic intermediate biosynthesis; chorismate biosynthesis; chorismate from D-erythrose 4-phosphate and phosphoenolpyruvate: step 5/7. Its function is as follows. Catalyzes the specific phosphorylation of the 3-hydroxyl group of shikimic acid using ATP as a cosubstrate. This is Shikimate kinase from Photobacterium profundum (strain SS9).